Reading from the N-terminus, the 478-residue chain is Stromelysin-1 (478 aa).

The signal sequence occupies residues 1–17 (MQNLPALLLFCGVVCSA). Residues 18 to 99 (YPVDRAAEDE…PRCGVPDVGD (82 aa)) constitute a propeptide, activation peptide. A Cysteine switch motif is present at residues 90–97 (PRCGVPDV). Residue Cys92 participates in Zn(2+) binding. Residues Asp124 and Asp158 each coordinate Ca(2+). 2 residues coordinate Zn(2+): His168 and Asp170. Residues Asp175, Gly176, Gly178, and Val180 each contribute to the Ca(2+) site. His183 lines the Zn(2+) pocket. The Ca(2+) site is built by Gly190 and Asp194. A Zn(2+)-binding site is contributed by His196. Residues Asp198, Asp199, and Glu201 each coordinate Ca(2+). His218 contacts Zn(2+). Glu219 is an active-site residue. Zn(2+) contacts are provided by His222 and His228. Residues 260–286 (QSLYGGPPSDSSNDPVVPTESVPPGPG) are disordered. The segment covering 266–277 (PPSDSSNDPVVP) has biased composition (low complexity). 4 Hemopexin repeats span residues 288 to 337 (PAAC…WPSL), 338 to 384 (PSGL…GFPP), 386 to 434 (VKKI…FPGV), and 435 to 478 (DSKV…WLNC). Cys291 and Cys478 are oxidised to a cystine. Residue Asp298 participates in Ca(2+) binding. Asp390 and Asp439 together coordinate Ca(2+). A glycan (N-linked (GlcNAc...) asparagine) is linked at Asn452.

Belongs to the peptidase M10A family. It depends on Ca(2+) as a cofactor. Requires Zn(2+) as cofactor.

It localises to the secreted. The protein resides in the extracellular space. It is found in the extracellular matrix. The catalysed reaction is Preferential cleavage where P1', P2' and P3' are hydrophobic residues.. In terms of biological role, metalloproteinase with a rather broad substrate specificity that can degrade fibronectin, laminin, gelatins of type I, III, IV, and V; collagens III, IV, X, and IX, and cartilage proteoglycans. Activates different molecules including growth factors, plasminogen or other matrix metalloproteinases such as MMP9. Once released into the extracellular matrix (ECM), the inactive pro-enzyme is activated by the plasmin cascade signaling pathway. Also acts intracellularly. For example, in dopaminergic neurons, gets activated by the serine protease HTRA2 upon stress and plays a pivotal role in DA neuronal degeneration by mediating microglial activation and alpha-synuclein/SNCA cleavage. In addition, plays a role in immune response and possesses antiviral activity against various viruses. Mechanistically, translocates from the cytoplasm into the cell nucleus upon virus infection to influence NF-kappa-B activities. This chain is Stromelysin-1 (MMP3), found in Canis lupus familiaris (Dog).